A 410-amino-acid polypeptide reads, in one-letter code: MKKWKDIHPISWTIIIGTIFGRMATSMSIPFLAIYLTAVQGASASYAGLVIAASSSVGILASFYGGYISDKFGRKNMMLVSIFGWMLVFAGFAAASNLWVFFVVNALNGLCKSLFEPASKALLSDMTEEKTRLLVFNLRYAAINIGVVFGPVLGLYFGSSQSTTPFLVPAVIYGLYGIVLALQFKKHPSLSAPAQSRNMSVREAFMVTQKDYLFTIALVGITLCTFGYSQFSSTFPQYMAQNPLIGNGTKLYGLMLTLNAIVVLATQFPIVHFAKRFSPLCSLMLGNVMVSISMAIFTVSHGVPSIVMIVITFTIGEVLLFSMMDLYVDQIAKPGLKGTYFGAIGFSQLGNVIGPWVGGICIDLFGAGRPIYIFSVLSGITLLGLPFLAFAYRQMKMETTKHRSRLEKPL.

The next 11 helical transmembrane spans lie at 14–34, 48–68, 82–102, 140–160, 164–184, 212–232, 251–271, 279–299, 303–323, 342–362, and 371–391; these read IIIG…FLAI, GLVI…GGYI, IFGW…WVFF, YAAI…FGSS, TPFL…ALQF, YLFT…SQFS, LYGL…FPIV, PLCS…IFTV, VPSI…LFSM, GAIG…GICI, and IYIF…LAFA.

This sequence belongs to the major facilitator superfamily. TCR/Tet family.

Its subcellular location is the cell membrane. This is an uncharacterized protein from Bacillus subtilis (strain 168).